Reading from the N-terminus, the 828-residue chain is Leucine--tRNA ligase (828 aa).

A 'HIGH' region motif is present at residues Pro-36 to His-46. The short motif at Lys-595 to Ser-599 is the 'KMSKS' region element. Residue Lys-598 coordinates ATP.

It belongs to the class-I aminoacyl-tRNA synthetase family.

The protein localises to the cytoplasm. The catalysed reaction is tRNA(Leu) + L-leucine + ATP = L-leucyl-tRNA(Leu) + AMP + diphosphate. The sequence is that of Leucine--tRNA ligase from Rickettsia typhi (strain ATCC VR-144 / Wilmington).